Here is a 929-residue protein sequence, read N- to C-terminus: Protein translocase subunit SecA (929 aa).

ATP contacts are provided by residues Gln-87, 105-109 (GEGKT), and Asp-512. 4 residues coordinate Zn(2+): Cys-914, Cys-916, Cys-925, and His-926.

The protein belongs to the SecA family. Monomer and homodimer. Part of the essential Sec protein translocation apparatus which comprises SecA, SecYEG and auxiliary proteins SecDF-YajC and YidC. It depends on Zn(2+) as a cofactor.

Its subcellular location is the cell inner membrane. The protein localises to the cytoplasm. The enzyme catalyses ATP + H2O + cellular proteinSide 1 = ADP + phosphate + cellular proteinSide 2.. Its function is as follows. Part of the Sec protein translocase complex. Interacts with the SecYEG preprotein conducting channel. Has a central role in coupling the hydrolysis of ATP to the transfer of proteins into and across the cell membrane, serving both as a receptor for the preprotein-SecB complex and as an ATP-driven molecular motor driving the stepwise translocation of polypeptide chains across the membrane. This is Protein translocase subunit SecA from Psychrobacter arcticus (strain DSM 17307 / VKM B-2377 / 273-4).